We begin with the raw amino-acid sequence, 435 residues long: GTPase Der (435 aa).

EngA-type G domains lie at 4–167 (PVVA…PEKD) and 175–350 (IRFS…DNHN). GTP contacts are provided by residues 10–17 (GRPNVGKS), 57–61 (DTGGI), 119–122 (NKAD), 181–188 (GRPNVGKS), 228–232 (DTAGI), and 293–296 (NKWD). The region spanning 351-435 (KRVQSATLND…PIHLIERARK (85 aa)) is the KH-like domain.

The protein belongs to the TRAFAC class TrmE-Era-EngA-EngB-Septin-like GTPase superfamily. EngA (Der) GTPase family. Associates with the 50S ribosomal subunit.

Its function is as follows. GTPase that plays an essential role in the late steps of ribosome biogenesis. This chain is GTPase Der, found in Levilactobacillus brevis (strain ATCC 367 / BCRC 12310 / CIP 105137 / JCM 1170 / LMG 11437 / NCIMB 947 / NCTC 947) (Lactobacillus brevis).